Here is a 130-residue protein sequence, read N- to C-terminus: Phosphomevalonate dehydratase small subunit (130 aa).

Serine 62 functions as the Proton acceptor in the catalytic mechanism.

It belongs to the AcnX type II small subunit family. Heterodimer composed of a large subunit (PMDh-L) and a small subunit (PMDh-S).

The enzyme catalyses (R)-5-phosphomevalonate = (2E)-3-methyl-5-phosphooxypent-2-enoate + H2O. Its pathway is isoprenoid biosynthesis; isopentenyl diphosphate biosynthesis via mevalonate pathway. Its function is as follows. Component of a hydro-lyase that catalyzes the dehydration of mevalonate 5-phosphate (MVA5P) to form trans-anhydromevalonate 5-phosphate (tAHMP). Involved in the archaeal mevalonate (MVA) pathway, which provides fundamental precursors for isoprenoid biosynthesis, such as isopentenyl diphosphate (IPP) and dimethylallyl diphosphate (DMAPP). The protein is Phosphomevalonate dehydratase small subunit of Thermococcus onnurineus (strain NA1).